The chain runs to 565 residues: Ubiquitin carboxyl-terminal hydrolase 21 (565 aa).

The span at 1 to 14 (MPQASEHRLGRTRE) shows a compositional bias: basic and acidic residues. Disordered regions lie at residues 1–103 (MPQA…LPLP), 109–128 (ARSKSVSSGDLRPMGIALGG), and 142–163 (LALRPEPPPLRRSTSLRRLGGF). A compositionally biased stretch (pro residues) spans 42–57 (APGPNPMLRPLPPRPG). Positions 58–70 (PPEERLKKLELGR) are enriched in basic and acidic residues. Over residues 71 to 82 (GRTSGPRPSGPL) the composition is skewed to low complexity. Residues 134 to 152 (ELGAALSRLALRPEPPPLR) carry the Nuclear export signal motif. Residues 212 to 558 (VGLRNLGNTC…EGYVLFYQLM (347 aa)) enclose the USP domain. Residue C221 is the Nucleophile of the active site. Zn(2+) contacts are provided by C384, C387, C437, and C440. Residue H518 is the Proton acceptor of the active site.

It belongs to the peptidase C19 family. USP21 subfamily. Interacts with BEND3.

The protein resides in the cytoplasm. The protein localises to the nucleus. It catalyses the reaction Thiol-dependent hydrolysis of ester, thioester, amide, peptide and isopeptide bonds formed by the C-terminal Gly of ubiquitin (a 76-residue protein attached to proteins as an intracellular targeting signal).. In terms of biological role, deubiquitinating enzyme that hydrolyzes 'Lys-6'- and 'Lys-11'-linked polyubiquitin. Also hydrolyzes heterotypic (mixed and branched) and homotypic chains. Important regulator of energy metabolism. Glucose and fatty acids trigger its nuclear translocation by CBP-dependent acetylation. In the nucleus, deubiquitinates and stabilizes the nuclear receptor PPARD regulating the expression of various genes involved in glucose and lipid metabolism and oxidative phosphorylation. Also acts as a negative regulator of the ribosome quality control (RQC) by mediating deubiquitination of 40S ribosomal proteins RPS10/eS10 and RPS20/uS10, thereby antagonizing ZNF598-mediated 40S ubiquitination. In Bos taurus (Bovine), this protein is Ubiquitin carboxyl-terminal hydrolase 21 (USP21).